The following is a 229-amino-acid chain: Complex I assembly factor TMEM126B, mitochondrial (229 aa).

4 helical membrane-spanning segments follow: residues 71–91, 109–129, 140–160, and 198–218; these read IRGT…ANLV, LTTL…TDAL, VLRS…ALAF, and VPLL…YAVC.

Part of the mitochondrial complex I assembly/MCIA complex that comprises at least the core subunits TMEM126B, NDUFAF1, ECSIT and ACAD9 and complement subunits such as COA1 and TMEM186. Associates with the intermediate 370 kDa subcomplex of incompletely assembled complex I. Interacts with TMEM70.

Its subcellular location is the mitochondrion membrane. Functionally, as part of the MCIA complex, involved in the assembly of the mitochondrial complex I. Participates in constructing the membrane arm of complex I. In Rattus norvegicus (Rat), this protein is Complex I assembly factor TMEM126B, mitochondrial.